Consider the following 398-residue polypeptide: MFLKNIFIALAIALLADATPTTFNNSPGFVALNFDVIKTHKNVTGPQGEINTNVNVKRQTVPVKLINEQVSYASDITVGSNKQKLTVVIDTGSSDLWVPDSQVSCQAGQGQDPNFCKNEGTYSPSSSSSSQNLNSPFSIEYGDGTTSQGTWYKDTIGFGGISITKQQFADVTSTSVDQGILGIGYKTHEAEGNYDNVPVTLKNQGIISKNAYSLYLNSRQATSGQIIFGGVDNAKYSGTLIALPVTSDNELRIHLNTVKVAGQSINADVDVLLDSGTTITYLQQGVADQVISAFNGQETYDANGNLFYLVDCNLSGSVDFAFDKNAKISVPASEFTAPLYTEDGQVYDQCQLLFGTSDYNILGDNFLRSAYIVYDLDDNEISLAQVKYTTASNIAALT.

The N-terminal stretch at 1–18 (MFLKNIFIALAIALLADA) is a signal peptide. Positions 19–58 (TPTTFNNSPGFVALNFDVIKTHKNVTGPQGEINTNVNVKR) are cleaved as a propeptide — activation peptide. The N-linked (GlcNAc...) asparagine glycan is linked to asparagine 42. Positions 72-384 (YASDITVGSN…DLDDNEISLA (313 aa)) constitute a Peptidase A1 domain. The active site involves aspartate 90. 90–92 (DTG) contributes to the pepstatin A binding site. The span at 103 to 112 (VSCQAGQGQD) shows a compositional bias: polar residues. The tract at residues 103–139 (VSCQAGQGQDPNFCKNEGTYSPSSSSSSQNLNSPFSI) is disordered. A disulfide bond links cysteine 105 and cysteine 116. The span at 123 to 138 (SPSSSSSSQNLNSPFS) shows a compositional bias: low complexity. 140–143 (EYGD) is a pepstatin A binding site. Histidine 188, aspartate 248, histidine 254, and aspartate 270 together coordinate Zn(2+). The active site involves aspartate 274. 274 to 278 (DSGTT) contributes to the pepstatin A binding site. Cysteines 312 and 350 form a disulfide. A glycan (N-linked (GlcNAc...) asparagine) is linked at asparagine 313.

Belongs to the peptidase A1 family. In terms of assembly, monomer.

The protein localises to the secreted. It catalyses the reaction Preferential cleavage at the carboxyl of hydrophobic amino acids, but fails to cleave 15-Leu-|-Tyr-16, 16-Tyr-|-Leu-17 and 24-Phe-|-Phe-25 of insulin B chain. Activates trypsinogen, and degrades keratin.. Inhibited by pepstatin A analogs. Its function is as follows. Secreted aspartic peptidases (SAPs) are a group of ten acidic hydrolases considered as key virulence factors. These enzymes supply the fungus with nutrient amino acids as well as are able to degrade the selected host's proteins involved in the immune defense. Induces host inflammatory cytokine production in a proteolytic activity-independent way. Moreover, acts toward human hemoglobin though limited proteolysis to generate a variety of antimicrobial hemocidins, enabling to compete with the other microorganisms of the same physiological niche using the microbicidal peptides generated from the host protein. Functionally, plays a key role in defense against host by cleaving histatin-5 (Hst 5), a peptide from human saliva that carries out fungicidal activity. The cleavage rate decreases in an order of SAP2 &gt; SAP9 &gt; SAP3 &gt; SAP7 &gt; SAP4 &gt; SAP1 &gt; SAP8. The first cleavage occurs between residues 'Lys-17' and 'His-18' of Hst 5, giving DSHAKRHHGYKRKFHEK and HHSHRGY peptides. Simultaneously, the DSHAKRHHGYKRK peptide is also formed. Further fragmentation by SAP3 results in DSHAKRHHGY and KRKFHEK products. This is Secreted aspartic protease 3 from Candida albicans (strain SC5314 / ATCC MYA-2876) (Yeast).